Reading from the N-terminus, the 171-residue chain is 3-hydroxydecanoyl-[acyl-carrier-protein] dehydratase (171 aa).

Residue H70 is part of the active site.

Belongs to the thioester dehydratase family. FabA subfamily. As to quaternary structure, homodimer.

It is found in the cytoplasm. The enzyme catalyses a (3R)-hydroxyacyl-[ACP] = a (2E)-enoyl-[ACP] + H2O. It carries out the reaction (3R)-hydroxydecanoyl-[ACP] = (2E)-decenoyl-[ACP] + H2O. The catalysed reaction is (2E)-decenoyl-[ACP] = (3Z)-decenoyl-[ACP]. It functions in the pathway lipid metabolism; fatty acid biosynthesis. Functionally, necessary for the introduction of cis unsaturation into fatty acids. Catalyzes the dehydration of (3R)-3-hydroxydecanoyl-ACP to E-(2)-decenoyl-ACP and then its isomerization to Z-(3)-decenoyl-ACP. Can catalyze the dehydratase reaction for beta-hydroxyacyl-ACPs with saturated chain lengths up to 16:0, being most active on intermediate chain length. The polypeptide is 3-hydroxydecanoyl-[acyl-carrier-protein] dehydratase (Shewanella oneidensis (strain ATCC 700550 / JCM 31522 / CIP 106686 / LMG 19005 / NCIMB 14063 / MR-1)).